The primary structure comprises 809 residues: Zinc finger CCCH domain-containing protein 24 (809 aa).

Position 1 is an N-acetylmethionine (M1). A disordered region spans residues 1 to 74; the sequence is METSSIEINE…NLESSDTKIT (74 aa). A compositionally biased stretch (polar residues) spans 30–46; it reads ETSSIDELPSSDSNATD. The segment covering 51-65 has biased composition (basic and acidic residues); that stretch reads VGEKRKRADEDEKTN. A C3H1-type zinc finger spans residues 79-107; it reads WWKTSLCSYFRREASCSHGNECKYAHGEA. 2 residues coordinate S-adenosyl-L-methionine: Q536 and E586. The disordered stretch occupies residues 652 to 693; sequence EEMTNSEHVADQNLPPSNTQVEELQDNEQKDSSSLEPEKTTK. Over residues 678–692 the composition is skewed to basic and acidic residues; it reads NEQKDSSSLEPEKTT. D704 lines the S-adenosyl-L-methionine pocket. C732 acts as the Nucleophile in catalysis.

It belongs to the class I-like SAM-binding methyltransferase superfamily. RNA M5U methyltransferase family.

The chain is Zinc finger CCCH domain-containing protein 24 from Arabidopsis thaliana (Mouse-ear cress).